Reading from the N-terminus, the 142-residue chain is Large ribosomal subunit protein uL11 (142 aa).

This sequence belongs to the universal ribosomal protein uL11 family. Part of the ribosomal stalk of the 50S ribosomal subunit. Interacts with L10 and the large rRNA to form the base of the stalk. L10 forms an elongated spine to which L12 dimers bind in a sequential fashion forming a multimeric L10(L12)X complex. Post-translationally, one or more lysine residues are methylated.

Its function is as follows. Forms part of the ribosomal stalk which helps the ribosome interact with GTP-bound translation factors. This is Large ribosomal subunit protein uL11 from Mycoplasma capricolum subsp. capricolum (strain California kid / ATCC 27343 / NCTC 10154).